Consider the following 578-residue polypeptide: Arginine--tRNA ligase (578 aa).

Positions Pro127–His137 match the 'HIGH' region motif.

This sequence belongs to the class-I aminoacyl-tRNA synthetase family. Monomer.

It is found in the cytoplasm. The catalysed reaction is tRNA(Arg) + L-arginine + ATP = L-arginyl-tRNA(Arg) + AMP + diphosphate. This chain is Arginine--tRNA ligase, found in Pseudomonas putida (strain ATCC 700007 / DSM 6899 / JCM 31910 / BCRC 17059 / LMG 24140 / F1).